We begin with the raw amino-acid sequence, 179 residues long: MSKTLQSFNLLKWIDENKELLKPPVNNKVIWQDSEFIAMILGGPNRRRDFHVDPSDEFFYQIKGECYVECITEEGKREVVTVKEGDVFMLPAMVPHSPHRVANTYGLVIERKRNQGELEDFVWFCDECNHEMHRVRVQLSDIEKQVKEAIHSFNSNKEIRACKNCGHIMPEEVEEWKCE.

R47 serves as a coordination point for O2. Residues H51, E57, and H96 each coordinate Fe cation. E57 serves as a coordination point for substrate. Positions 100 and 110 each coordinate substrate. Fe cation is bound by residues C125, C128, C162, and C165.

It belongs to the 3-HAO family. Fe(2+) is required as a cofactor.

It catalyses the reaction 3-hydroxyanthranilate + O2 = (2Z,4Z)-2-amino-3-carboxymuconate 6-semialdehyde. It participates in cofactor biosynthesis; NAD(+) biosynthesis; quinolinate from L-kynurenine: step 3/3. In terms of biological role, catalyzes the oxidative ring opening of 3-hydroxyanthranilate to 2-amino-3-carboxymuconate semialdehyde, which spontaneously cyclizes to quinolinate. This Bacillus cereus (strain ATCC 10987 / NRS 248) protein is 3-hydroxyanthranilate 3,4-dioxygenase.